The chain runs to 221 residues: Phosphoribosylformylglycinamidine synthase subunit PurQ (221 aa).

In terms of domain architecture, Glutamine amidotransferase type-1 spans 2–221; sequence KTAVIQFPGS…VFESLKTVKK (220 aa). Cysteine 87 serves as the catalytic Nucleophile. Catalysis depends on residues histidine 195 and glutamate 197.

As to quaternary structure, part of the FGAM synthase complex composed of 1 PurL, 1 PurQ and 2 PurS subunits.

Its subcellular location is the cytoplasm. The catalysed reaction is N(2)-formyl-N(1)-(5-phospho-beta-D-ribosyl)glycinamide + L-glutamine + ATP + H2O = 2-formamido-N(1)-(5-O-phospho-beta-D-ribosyl)acetamidine + L-glutamate + ADP + phosphate + H(+). It carries out the reaction L-glutamine + H2O = L-glutamate + NH4(+). It functions in the pathway purine metabolism; IMP biosynthesis via de novo pathway; 5-amino-1-(5-phospho-D-ribosyl)imidazole from N(2)-formyl-N(1)-(5-phospho-D-ribosyl)glycinamide: step 1/2. Part of the phosphoribosylformylglycinamidine synthase complex involved in the purines biosynthetic pathway. Catalyzes the ATP-dependent conversion of formylglycinamide ribonucleotide (FGAR) and glutamine to yield formylglycinamidine ribonucleotide (FGAM) and glutamate. The FGAM synthase complex is composed of three subunits. PurQ produces an ammonia molecule by converting glutamine to glutamate. PurL transfers the ammonia molecule to FGAR to form FGAM in an ATP-dependent manner. PurS interacts with PurQ and PurL and is thought to assist in the transfer of the ammonia molecule from PurQ to PurL. The polypeptide is Phosphoribosylformylglycinamidine synthase subunit PurQ (Deinococcus radiodurans (strain ATCC 13939 / DSM 20539 / JCM 16871 / CCUG 27074 / LMG 4051 / NBRC 15346 / NCIMB 9279 / VKM B-1422 / R1)).